Reading from the N-terminus, the 409-residue chain is 8-amino-7-oxononanoate synthase (409 aa).

Arg-20 serves as a coordination point for substrate. 116 to 117 is a binding site for pyridoxal 5'-phosphate; that stretch reads GY. Residue His-141 coordinates substrate. Positions 187, 215, and 243 each coordinate pyridoxal 5'-phosphate. Lys-246 bears the N6-(pyridoxal phosphate)lysine mark. Thr-369 contacts substrate.

It belongs to the class-II pyridoxal-phosphate-dependent aminotransferase family. BioF subfamily. Homodimer. It depends on pyridoxal 5'-phosphate as a cofactor.

The enzyme catalyses 6-carboxyhexanoyl-[ACP] + L-alanine + H(+) = (8S)-8-amino-7-oxononanoate + holo-[ACP] + CO2. It functions in the pathway cofactor biosynthesis; biotin biosynthesis. Catalyzes the decarboxylative condensation of pimeloyl-[acyl-carrier protein] and L-alanine to produce 8-amino-7-oxononanoate (AON), [acyl-carrier protein], and carbon dioxide. This is 8-amino-7-oxononanoate synthase from Polaromonas naphthalenivorans (strain CJ2).